The sequence spans 249 residues: Olfactory receptor 1571 (249 aa).

A helical transmembrane segment spans residues 1–9; that stretch reads LLMCNLCFA. Residues 10–40 lie on the Extracellular side of the membrane; that stretch reads DICFTSASIPTNLVNIQTKNKVITYEGCISQ. The cysteines at positions 37 and 119 are disulfide-linked. A helical transmembrane segment spans residues 41-60; the sequence is VYFFILFGVLDNFLLAVMAY. Topologically, residues 61–82 are cytoplasmic; that stretch reads DRYVAICHPLHYTVIMNRRLCG. Residues 83–103 traverse the membrane as a helical segment; that stretch reads LLVLGSWVTTALNSLLQSSMA. Residues 104–136 are Extracellular-facing; it reads LRLSFCTDLKIPHFVCELNQLVLLACNDTFPND. N-linked (GlcNAc...) asparagine glycosylation is present at N130. Residues 137–158 form a helical membrane-spanning segment; sequence MVMYFAAVLLGGGPLAGILYSY. The Cytoplasmic portion of the chain corresponds to 159 to 180; it reads SKIVSSIRAISSSQGKYKAFST. A helical transmembrane segment spans residues 181 to 200; that stretch reads CASHLSVVSLFYSTLLGVYL. The Extracellular portion of the chain corresponds to 201–210; that stretch reads SSSFTQNSHS. The helical transmembrane segment at 211–232 threads the bilayer; it reads TARASVMYSVVTPMLNPFIYSL. At 233–249 the chain is on the cytoplasmic side; the sequence is RNKDLMGALRRLFRRKP.

Belongs to the G-protein coupled receptor 1 family. As to expression, tongue specific.

The protein localises to the cell membrane. In terms of biological role, possible taste receptor. This is Olfactory receptor 1571 (Olr1571) from Rattus norvegicus (Rat).